Consider the following 28-residue polypeptide: Cysteine-rich venom protein asurin-2 (28 aa).

Basic and acidic residues predominate over residues S1–N15. Positions S1 to M28 are disordered. Polar residues predominate over residues L17–M28.

The protein belongs to the CRISP family. In terms of processing, contains 8 disulfide bonds. In terms of tissue distribution, expressed by the venom gland.

The protein resides in the secreted. Blocks contraction of smooth muscle elicited by high potassium-induced depolarization, but does not block caffeine-stimulated contraction. May target voltage-gated calcium channels on smooth muscle. This is Cysteine-rich venom protein asurin-2 from Austrelaps superbus (Lowland copperhead snake).